We begin with the raw amino-acid sequence, 193 residues long: Superoxide dismutase [Fe] (193 aa).

Fe cation is bound by residues His27, His74, Asp157, and His161.

It belongs to the iron/manganese superoxide dismutase family. In terms of assembly, homodimer. Requires Fe cation as cofactor.

The enzyme catalyses 2 superoxide + 2 H(+) = H2O2 + O2. Functionally, destroys superoxide anion radicals which are normally produced within the cells and which are toxic to biological systems. Partially complements double sodA-sodB deletions in E.coli. This chain is Superoxide dismutase [Fe], found in Pseudomonas aeruginosa (strain ATCC 15692 / DSM 22644 / CIP 104116 / JCM 14847 / LMG 12228 / 1C / PRS 101 / PAO1).